The primary structure comprises 424 residues: Serine--tRNA ligase (424 aa).

An L-serine-binding site is contributed by 231–233; it reads TAE. 262–264 provides a ligand contact to ATP; the sequence is RAE. Residue Glu285 coordinates L-serine. 349–352 contributes to the ATP binding site; sequence EISS. Ser385 is an L-serine binding site.

This sequence belongs to the class-II aminoacyl-tRNA synthetase family. Type-1 seryl-tRNA synthetase subfamily. Homodimer. The tRNA molecule binds across the dimer.

It is found in the cytoplasm. The enzyme catalyses tRNA(Ser) + L-serine + ATP = L-seryl-tRNA(Ser) + AMP + diphosphate + H(+). It catalyses the reaction tRNA(Sec) + L-serine + ATP = L-seryl-tRNA(Sec) + AMP + diphosphate + H(+). The protein operates within aminoacyl-tRNA biosynthesis; selenocysteinyl-tRNA(Sec) biosynthesis; L-seryl-tRNA(Sec) from L-serine and tRNA(Sec): step 1/1. In terms of biological role, catalyzes the attachment of serine to tRNA(Ser). Is also able to aminoacylate tRNA(Sec) with serine, to form the misacylated tRNA L-seryl-tRNA(Sec), which will be further converted into selenocysteinyl-tRNA(Sec). This chain is Serine--tRNA ligase, found in Geobacillus sp. (strain WCH70).